The following is a 379-amino-acid chain: Cytochrome b (379 aa).

Helical transmembrane passes span Phe34–Met54, Trp78–Ile99, Trp114–Leu134, and Phe179–Thr199. 2 residues coordinate heme b: His84 and His98. The heme b site is built by His183 and His197. Position 202 (His202) interacts with a ubiquinone. Helical transmembrane passes span Leu227–Ser247, Leu289–His309, Leu321–Ser341, and Phe348–Pro368.

It belongs to the cytochrome b family. In terms of assembly, the cytochrome bc1 complex contains 11 subunits: 3 respiratory subunits (MT-CYB, CYC1 and UQCRFS1), 2 core proteins (UQCRC1 and UQCRC2) and 6 low-molecular weight proteins (UQCRH/QCR6, UQCRB/QCR7, UQCRQ/QCR8, UQCR10/QCR9, UQCR11/QCR10 and a cleavage product of UQCRFS1). This cytochrome bc1 complex then forms a dimer. Heme b serves as cofactor.

It localises to the mitochondrion inner membrane. In terms of biological role, component of the ubiquinol-cytochrome c reductase complex (complex III or cytochrome b-c1 complex) that is part of the mitochondrial respiratory chain. The b-c1 complex mediates electron transfer from ubiquinol to cytochrome c. Contributes to the generation of a proton gradient across the mitochondrial membrane that is then used for ATP synthesis. The sequence is that of Cytochrome b (MT-CYB) from Struthio camelus (Common ostrich).